The sequence spans 392 residues: MELVAGCYEQVLFGFAVHPEPEACGDHEQWTLVADFTHHAHTASLSAVAVNSRFVVTGSKDETIHIYDMKKKIEHGALVHHSGTITCLKFYGNRHLISGAEDGLICIWDAKKWECLKSIKAHKGQVTFLSIHPSGKLALSVGTDKTLRTWNLVEGRSAFIKNIKQNAHIVEWSPRGEQYVVIIQNKIDIYQLDTASISGTITNEKRISSVKFLSESVLAVAGDEEVIRFFDCDSLVCLCEFKAHENRVKDMFSFEIPEHHVIVSASSDGFIKMWKLKQDKKVPPSLLCEINTNARLTCLGVWLDKVADMKESLPPAAEPSPVSKEQSKIGKKEPGDTVHKEEKRSKPNTKKRGLTGDSKKATKESGLISTKKRKMVEMLEKKRKKKKIKTMQ.

WD repeat units lie at residues 33–72 (VADFTHHAHTASLSAVAVNSRFVVTGSKDETIHIYDMKKK), 73–113 (IEHG…AKKW), 114–155 (ECLK…LVEG), 156–195 (RSAFIKNIKQNAHIVEWSPRGEQYVVIIQNKIDIYQLDTA), 196–235 (SISGTITNEKRISSVKFLSESVLAVAGDEEVIRFFDCDSL), and 236–275 (VCLCEFKAHENRVKDMFSFEIPEHHVIVSASSDGFIKMWK). Residues 312–392 (SLPPAAEPSP…RKKKKIKTMQ (81 aa)) are disordered. Ser-320 bears the Phosphoserine mark. A compositionally biased stretch (basic and acidic residues) spans 325–345 (EQSKIGKKEPGDTVHKEEKRS). The segment covering 381–392 (KKRKKKKIKTMQ) has biased composition (basic residues).

In terms of assembly, interacts with PAK1. In terms of tissue distribution, expressed in brain, colon, heart, kidney, liver, lung, muscle, peripheral blood leukocytes, placenta, small intestine, spleen and thymus.

The protein resides in the nucleus. It localises to the nucleolus. Negatively regulates the PAK1 kinase. PAK1 is a member of the PAK kinase family, which has been shown to play a positive role in the regulation of signaling pathways involving MAPK8 and RELA. PAK1 exists as an inactive homodimer, which is activated by binding of small GTPases such as CDC42 to an N-terminal regulatory domain. PAK1IP1 also binds to the N-terminus of PAK1, and inhibits the specific activation of PAK1 by CDC42. May be involved in ribosomal large subunit assembly. This Homo sapiens (Human) protein is p21-activated protein kinase-interacting protein 1 (PAK1IP1).